A 276-amino-acid polypeptide reads, in one-letter code: NADH-cytochrome b5 reductase 2 (276 aa).

The FAD-binding FR-type domain occupies 15 to 127 (EAKYPLPLIE…RGPTGRLFYN (113 aa)). K17 carries the post-translational modification N6-acetyllysine. Y18 carries the post-translational modification Phosphotyrosine. Residues 107–137 (ENMK…IKTD) and 146–181 (LVHH…RMSL) contribute to the FAD site.

This sequence belongs to the flavoprotein pyridine nucleotide cytochrome reductase family. FAD serves as cofactor.

It carries out the reaction 2 Fe(III)-[cytochrome b5] + NADH = 2 Fe(II)-[cytochrome b5] + NAD(+) + H(+). Its function is as follows. NADH-cytochrome b5 reductases are involved in desaturation and elongation of fatty acids, cholesterol biosynthesis, drug metabolism, and, in erythrocyte, methemoglobin reduction. Responsible for NADH-dependent lucigenin chemiluminescence in spermatozoa by reducing both lucigenin and 2-[4-iodophenyl]-3-[4-nitrophenyl]-5-[2,4-disulfophenyl]-2H tetrazolium monosodium salt (WST-1). The chain is NADH-cytochrome b5 reductase 2 (Cyb5r2) from Rattus norvegicus (Rat).